A 578-amino-acid chain; its full sequence is Lysine--tRNA ligase (578 aa).

The Mg(2+) site is built by Glu-414 and Glu-421.

The protein belongs to the class-II aminoacyl-tRNA synthetase family. Homodimer. Mg(2+) is required as a cofactor.

It localises to the cytoplasm. The enzyme catalyses tRNA(Lys) + L-lysine + ATP = L-lysyl-tRNA(Lys) + AMP + diphosphate. The sequence is that of Lysine--tRNA ligase from Porphyromonas gingivalis (strain ATCC BAA-308 / W83).